The sequence spans 570 residues: MIPPEIRRSVLLQKAIKLALAGTLLTFASFSATAADPSSDTETPQPPDILLGPLFNDVQNAKLFPDQKTFADAIPNSDPLMILADYRMQRNQSGFDLRHFVDVNFTLPKAGEKYVPPAGQSLREHIDGLWPVLTRSTKNVEKWDSLLPLPESYVVPGGRFREIYYWDSYFTMLGLAESGHWDKVADMVANFGYEIDAWGHIPNGNRTYYLSRSQPPFFAFMIELLAQHEGDDALKEYLPQLQKEYAYWMEGVETLQPGQQNQRVVKLEDGSVLNRYWDDRDTPRPESWVEDIATAKSNPNRPATEIYRDLRSAAASGWDFSSRWMDNPQQLSTIRTTTIVPVDLNALLYQLEKTLARASAAAGDRAEASQYDALANARQKAIEMHLWNNKEGWYADYDLQNNKIRDQLTAAALFPLYVNAAAKDRAVKVAAAAQAHLLQPGGLATTSVKSGQQWDAPNGWAPLQWVAAEGLQNYGQDDVAMEVTWRFLTNVQHTYDREKKLVEKYDVSSTGTGGGGGEYPLQDGFGWTNGVTLKMLDLICPQEKPCDSVPSTRPASLSATPTKTPSAATQ.

An N-terminal signal peptide occupies residues 1–34 (MIPPEIRRSVLLQKAIKLALAGTLLTFASFSATA). Residues arginine 159, 166–167 (WD), asparagine 203, 212–214 (RSQ), 284–286 (RPE), and glycine 317 contribute to the substrate site. Active-site proton donor/acceptor residues include aspartate 319 and glutamate 503. Glutamate 518 contacts substrate. A disordered region spans residues 544–570 (KPCDSVPSTRPASLSATPTKTPSAATQ). Over residues 554-570 (PASLSATPTKTPSAATQ) the composition is skewed to low complexity.

The protein belongs to the glycosyl hydrolase 37 family. Monomer.

Its subcellular location is the periplasm. The catalysed reaction is alpha,alpha-trehalose + H2O = alpha-D-glucose + beta-D-glucose. Functionally, provides the cells with the ability to utilize trehalose at high osmolarity by splitting it into glucose molecules that can subsequently be taken up by the phosphotransferase-mediated uptake system. The polypeptide is Periplasmic trehalase (Salmonella schwarzengrund (strain CVM19633)).